The chain runs to 276 residues: uncharacterized protein (276 aa).

Residues 1 to 25 form the signal peptide; it reads MNKKRLLPKASLGALFMLFGTALTA. The N-palmitoyl cysteine moiety is linked to residue Cys26. Cys26 carries the S-diacylglycerol cysteine lipid modification.

This sequence belongs to the MG439/MG440 family.

It localises to the cell membrane. This is an uncharacterized protein from Mycoplasma pneumoniae (strain ATCC 29342 / M129 / Subtype 1) (Mycoplasmoides pneumoniae).